The sequence spans 182 residues: Flagellar transcriptional regulator FlhC (182 aa).

Zn(2+)-binding residues include Cys-138, Cys-141, Cys-158, and Cys-161.

Belongs to the FlhC family. Heterohexamer composed of two FlhC and four FlhD subunits. Each FlhC binds a FlhD dimer, forming a heterotrimer, and a hexamer assembles by dimerization of two heterotrimers. It depends on Zn(2+) as a cofactor.

It is found in the cytoplasm. Functionally, functions in complex with FlhD as a master transcriptional regulator that regulates transcription of several flagellar and non-flagellar operons by binding to their promoter region. Activates expression of class 2 flagellar genes, including fliA, which is a flagellum-specific sigma factor that turns on the class 3 genes. Also regulates genes whose products function in a variety of physiological pathways. The protein is Flagellar transcriptional regulator FlhC of Gallionella capsiferriformans (strain ES-2) (Gallionella ferruginea capsiferriformans (strain ES-2)).